Reading from the N-terminus, the 463-residue chain is MVVQYLLFSNDKNVDPTNLVLRQDFLHQKCLLISVSNSSHIFHEMLSFRNVRKDDFIIEFFSENNVCSLDNCIAKKIHYLSDINTFDMLLSLDGEYESLIKWFISVNYFEALQNYQHLVKSLSLKTDLMFYAVSKNVSIDVINFLIDMDCKCTIDSITRAIAEKKLDIAKIIIDHNPSENIIHESLYCLSYEKQKDLFKYVLENYKIDSRYYHKSLIYWMINKDEEIMCDLLCRIDIKEFSKEKNISSYVIQSNSLNVVKTFVEHGLQFNPDIYLWVNGNSESENIVRYIIELGIDYRPHIDRLLKICITSGTFSHLEYLINLGVSQENINEAFLTAVSEDKFELIKYLIYMGADINYKNTIAASYTDNIDVLKYLIEKGADITTGGSNDVINHAIGSHQSDFCRCLLENGATITLDDRDELMVIYRELTNGCSYEDDDYEDLDQLTNSDLRNLIHEEIMNSC.

ANK repeat units follow at residues 124-154, 156-181, 242-271, 273-299, 300-328, 329-355, 356-385, and 387-416; these read LKTD…KCTI, SITR…SENI, KEKN…QFNP, IYLW…DYRP, HIDR…VSQE, NINE…MGAD, INYK…DITT, and GSND…TITL.

The polypeptide is Putative ankyrin repeat protein R579 (Acanthamoeba polyphaga (Amoeba)).